A 1401-amino-acid chain; its full sequence is DNA-directed RNA polymerase subunit beta'' (1401 aa).

4 residues coordinate Zn(2+): cysteine 224, cysteine 295, cysteine 302, and cysteine 305.

This sequence belongs to the RNA polymerase beta' chain family. RpoC2 subfamily. In terms of assembly, in plastids the minimal PEP RNA polymerase catalytic core is composed of four subunits: alpha, beta, beta', and beta''. When a (nuclear-encoded) sigma factor is associated with the core the holoenzyme is formed, which can initiate transcription. The cofactor is Zn(2+).

It is found in the plastid. The protein localises to the chloroplast. The catalysed reaction is RNA(n) + a ribonucleoside 5'-triphosphate = RNA(n+1) + diphosphate. DNA-dependent RNA polymerase catalyzes the transcription of DNA into RNA using the four ribonucleoside triphosphates as substrates. The protein is DNA-directed RNA polymerase subunit beta'' of Ipomoea purpurea (Common morning glory).